The following is a 262-amino-acid chain: tRNA pseudouridine synthase A (262 aa).

Catalysis depends on Asp-51, which acts as the Nucleophile. Residue Tyr-109 participates in substrate binding.

This sequence belongs to the tRNA pseudouridine synthase TruA family. Homodimer.

It catalyses the reaction uridine(38/39/40) in tRNA = pseudouridine(38/39/40) in tRNA. Formation of pseudouridine at positions 38, 39 and 40 in the anticodon stem and loop of transfer RNAs. The chain is tRNA pseudouridine synthase A from Actinobacillus pleuropneumoniae serotype 5b (strain L20).